The chain runs to 358 residues: Putative ZDHHC-type palmitoyltransferase 4 (358 aa).

Transmembrane regions (helical) follow at residues 28–48 (FVGF…TIIF), 57–77 (LFFI…TYGI), 171–191 (YFFL…AHSL), and 210–230 (LLVI…GSFG). The 51-residue stretch at 127-177 (SYCKKCSKAKPPRCHHCSVCDKCVLKMDHHCPWIGGCVGFYNYRYFFLFLS) folds into the DHHC domain. N-linked (GlcNAc...) asparagine glycans are attached at residues N255 and N296. The segment at 302–358 (NNKNNENNENNENNEIDNHNNNNNNNNNNNNNEKEDNINENDNLISYDTDEYNRHKK) is disordered. A compositionally biased stretch (low complexity) spans 305–332 (NNENNENNENNEIDNHNNNNNNNNNNNN).

Belongs to the DHHC palmitoyltransferase family.

The protein resides in the membrane. It catalyses the reaction L-cysteinyl-[protein] + hexadecanoyl-CoA = S-hexadecanoyl-L-cysteinyl-[protein] + CoA. This Dictyostelium discoideum (Social amoeba) protein is Putative ZDHHC-type palmitoyltransferase 4.